Here is a 359-residue protein sequence, read N- to C-terminus: MDPEAFAVVGLRTMGGLEELFEAYGIRYLTASRIAEMGFTANTLLDMKEEELDDMMNSLSHIFRWDLLVGERYGIKAAIRAERRRLLEADDRRHHLHSTDHALLDALSHQGLSEEQVVQHSEKDQLGRAGSGDTAGTSWGAQQQRKKHRHRHHITAMKGAATEEDEEDEEEVEEMRRQREHPFIVTEPGEVARGKKNGLDYLFHLYDQCRDFLLQVQSLAKERGEKCPTKVTNQVFRYAKKAGASYINKPKMRHYVHCYALHCLDEHASNALRKSFKERGENVGAWRQACYHPLVTIAGRRAGWDIDAIFNAHPRLCIWYVPTKLRQLCHAHRHSSASAASSASTSTSAPTAHHLELPY.

A disordered region spans residues 113–170 (SEEQVVQHSEKDQLGRAGSGDTAGTSWGAQQQRKKHRHRHHITAMKGAATEEDEEDEE). The segment covering 144–155 (QRKKHRHRHHIT) has biased composition (basic residues). 3 DNA-binding regions span residues 179–183 (REHPF), 248–255 (NKPKMRHY), and 320–323 (YVPT). Positions 340 to 352 (ASSASTSTSAPTA) are enriched in low complexity. Residues 340-359 (ASSASTSTSAPTAHHLELPY) are disordered.

This sequence belongs to the FLO/LFY family. In terms of tissue distribution, expressed strongly in the early floral primordium and then successively in the primordia of sepals, petals, stamens and carpels. Also in the leaf primordia and young leaves.

Its subcellular location is the nucleus. In terms of biological role, probable transcription factor. The polypeptide is Leafy/floricaula homolog FL1 (LF1) (Eucalyptus globulus (Tasmanian blue gum)).